The sequence spans 660 residues: Acetyl-coenzyme A synthetase (660 aa).

CoA-binding positions include 197 to 200 (RGGK) and T317. ATP contacts are provided by residues 397-399 (GEP), 421-426 (DTWWQT), D512, and R528. S536 serves as a coordination point for CoA. R539 serves as a coordination point for ATP. Residues V550 and V555 each contribute to the Mg(2+) site. K625 bears the N6-acetyllysine mark.

This sequence belongs to the ATP-dependent AMP-binding enzyme family. It depends on Mg(2+) as a cofactor. Post-translationally, acetylated. Deacetylation by the SIR2-homolog deacetylase activates the enzyme.

It carries out the reaction acetate + ATP + CoA = acetyl-CoA + AMP + diphosphate. Its function is as follows. Catalyzes the conversion of acetate into acetyl-CoA (AcCoA), an essential intermediate at the junction of anabolic and catabolic pathways. AcsA undergoes a two-step reaction. In the first half reaction, AcsA combines acetate with ATP to form acetyl-adenylate (AcAMP) intermediate. In the second half reaction, it can then transfer the acetyl group from AcAMP to the sulfhydryl group of CoA, forming the product AcCoA. The sequence is that of Acetyl-coenzyme A synthetase from Paraburkholderia phymatum (strain DSM 17167 / CIP 108236 / LMG 21445 / STM815) (Burkholderia phymatum).